The following is a 397-amino-acid chain: Proteasome-activating nucleotidase (397 aa).

Positions 15–58 (DYVTFLKRRIRQLELQVRTLEADKERLERELSRLRMEMSRLRQP) form a coiled coil. ATP is bound by residues 182-187 (GCGKTL) and His-321. The docks into pockets in the proteasome alpha-ring to cause gate opening stretch occupies residues 395-397 (MYG).

This sequence belongs to the AAA ATPase family. Homohexamer. The hexameric complex has a two-ring architecture resembling a top hat that caps the 20S proteasome core at one or both ends. Upon ATP-binding, the C-terminus of PAN interacts with the alpha-rings of the proteasome core by binding to the intersubunit pockets.

The protein localises to the cytoplasm. Functionally, ATPase which is responsible for recognizing, binding, unfolding and translocation of substrate proteins into the archaeal 20S proteasome core particle. Is essential for opening the gate of the 20S proteasome via an interaction with its C-terminus, thereby allowing substrate entry and access to the site of proteolysis. Thus, the C-termini of the proteasomal ATPase function like a 'key in a lock' to induce gate opening and therefore regulate proteolysis. Unfolding activity requires energy from ATP hydrolysis, whereas ATP binding alone promotes ATPase-20S proteasome association which triggers gate opening, and supports translocation of unfolded substrates. In Thermococcus kodakarensis (strain ATCC BAA-918 / JCM 12380 / KOD1) (Pyrococcus kodakaraensis (strain KOD1)), this protein is Proteasome-activating nucleotidase.